A 503-amino-acid polypeptide reads, in one-letter code: Aspartyl/glutamyl-tRNA(Asn/Gln) amidotransferase subunit B (503 aa).

The protein belongs to the GatB/GatE family. GatB subfamily. Heterotrimer of A, B and C subunits.

The catalysed reaction is L-glutamyl-tRNA(Gln) + L-glutamine + ATP + H2O = L-glutaminyl-tRNA(Gln) + L-glutamate + ADP + phosphate + H(+). The enzyme catalyses L-aspartyl-tRNA(Asn) + L-glutamine + ATP + H2O = L-asparaginyl-tRNA(Asn) + L-glutamate + ADP + phosphate + 2 H(+). Allows the formation of correctly charged Asn-tRNA(Asn) or Gln-tRNA(Gln) through the transamidation of misacylated Asp-tRNA(Asn) or Glu-tRNA(Gln) in organisms which lack either or both of asparaginyl-tRNA or glutaminyl-tRNA synthetases. The reaction takes place in the presence of glutamine and ATP through an activated phospho-Asp-tRNA(Asn) or phospho-Glu-tRNA(Gln). This is Aspartyl/glutamyl-tRNA(Asn/Gln) amidotransferase subunit B from Cereibacter sphaeroides (strain ATCC 17025 / ATH 2.4.3) (Rhodobacter sphaeroides).